The sequence spans 156 residues: SsrA-binding protein (156 aa).

The protein belongs to the SmpB family.

The protein resides in the cytoplasm. In terms of biological role, required for rescue of stalled ribosomes mediated by trans-translation. Binds to transfer-messenger RNA (tmRNA), required for stable association of tmRNA with ribosomes. tmRNA and SmpB together mimic tRNA shape, replacing the anticodon stem-loop with SmpB. tmRNA is encoded by the ssrA gene; the 2 termini fold to resemble tRNA(Ala) and it encodes a 'tag peptide', a short internal open reading frame. During trans-translation Ala-aminoacylated tmRNA acts like a tRNA, entering the A-site of stalled ribosomes, displacing the stalled mRNA. The ribosome then switches to translate the ORF on the tmRNA; the nascent peptide is terminated with the 'tag peptide' encoded by the tmRNA and targeted for degradation. The ribosome is freed to recommence translation, which seems to be the essential function of trans-translation. In Clostridium botulinum (strain Alaska E43 / Type E3), this protein is SsrA-binding protein.